A 157-amino-acid polypeptide reads, in one-letter code: 2-C-methyl-D-erythritol 2,4-cyclodiphosphate synthase (157 aa).

Positions 8 and 10 each coordinate a divalent metal cation. Residues 8–10 (DVH) and 34–35 (HS) contribute to the 4-CDP-2-C-methyl-D-erythritol 2-phosphate site. His-42 contacts a divalent metal cation. Residues 56–58 (DIG), 61–65 (FPDTD), 132–135 (TTEE), and Phe-139 each bind 4-CDP-2-C-methyl-D-erythritol 2-phosphate.

It belongs to the IspF family. Homotrimer. A divalent metal cation is required as a cofactor.

It carries out the reaction 4-CDP-2-C-methyl-D-erythritol 2-phosphate = 2-C-methyl-D-erythritol 2,4-cyclic diphosphate + CMP. It participates in isoprenoid biosynthesis; isopentenyl diphosphate biosynthesis via DXP pathway; isopentenyl diphosphate from 1-deoxy-D-xylulose 5-phosphate: step 4/6. Functionally, involved in the biosynthesis of isopentenyl diphosphate (IPP) and dimethylallyl diphosphate (DMAPP), two major building blocks of isoprenoid compounds. Catalyzes the conversion of 4-diphosphocytidyl-2-C-methyl-D-erythritol 2-phosphate (CDP-ME2P) to 2-C-methyl-D-erythritol 2,4-cyclodiphosphate (ME-CPP) with a corresponding release of cytidine 5-monophosphate (CMP). In Clostridium botulinum (strain Alaska E43 / Type E3), this protein is 2-C-methyl-D-erythritol 2,4-cyclodiphosphate synthase.